The primary structure comprises 261 residues: MAHQAHAYHMVDPSPWPLTGAIAALLLTSGTAVWFHFHSLTLLTLGNILLLLTMYQWWRDIIREGTFQGHHTPPVQKGLRYGMILFITSEVFFFLGFFWAFYHASLAPTPELGGCWPPAGITTLDPFEVPLLNTAVLLASGVTVTWAHHSIMEGERKQTIQALTLTILLGFYFTFLQGMEYYEAPFTIADGVYGSTFFVATGFHGLHVIIGSTFLAVCLLRQVQYHFTSEHHFGFEAAAWYWHFVDVVWLFLYVSIYWWGS.

Over M1–P15 the chain is Mitochondrial matrix. A helical transmembrane segment spans residues W16 to W34. Over F35–L40 the chain is Mitochondrial intermembrane. The helical transmembrane segment at T41–T66 threads the bilayer. At F67 to T72 the chain is on the mitochondrial matrix side. A helical membrane pass occupies residues P73–S105. At L106 to E128 the chain is on the mitochondrial intermembrane side. The chain crosses the membrane as a helical span at residues V129–M152. Topologically, residues E153–E155 are mitochondrial matrix. Residues R156–E183 traverse the membrane as a helical segment. The Mitochondrial intermembrane portion of the chain corresponds to A184 to D190. The chain crosses the membrane as a helical span at residues G191–V223. At Q224–H232 the chain is on the mitochondrial matrix side. Residues F233 to I256 form a helical membrane-spanning segment. At Y257 to S261 the chain is on the mitochondrial intermembrane side.

This sequence belongs to the cytochrome c oxidase subunit 3 family. In terms of assembly, component of the cytochrome c oxidase (complex IV, CIV), a multisubunit enzyme composed of 14 subunits. The complex is composed of a catalytic core of 3 subunits MT-CO1, MT-CO2 and MT-CO3, encoded in the mitochondrial DNA, and 11 supernumerary subunits COX4I, COX5A, COX5B, COX6A, COX6B, COX6C, COX7A, COX7B, COX7C, COX8 and NDUFA4, which are encoded in the nuclear genome. The complex exists as a monomer or a dimer and forms supercomplexes (SCs) in the inner mitochondrial membrane with NADH-ubiquinone oxidoreductase (complex I, CI) and ubiquinol-cytochrome c oxidoreductase (cytochrome b-c1 complex, complex III, CIII), resulting in different assemblies (supercomplex SCI(1)III(2)IV(1) and megacomplex MCI(2)III(2)IV(2)).

It is found in the mitochondrion inner membrane. The enzyme catalyses 4 Fe(II)-[cytochrome c] + O2 + 8 H(+)(in) = 4 Fe(III)-[cytochrome c] + 2 H2O + 4 H(+)(out). In terms of biological role, component of the cytochrome c oxidase, the last enzyme in the mitochondrial electron transport chain which drives oxidative phosphorylation. The respiratory chain contains 3 multisubunit complexes succinate dehydrogenase (complex II, CII), ubiquinol-cytochrome c oxidoreductase (cytochrome b-c1 complex, complex III, CIII) and cytochrome c oxidase (complex IV, CIV), that cooperate to transfer electrons derived from NADH and succinate to molecular oxygen, creating an electrochemical gradient over the inner membrane that drives transmembrane transport and the ATP synthase. Cytochrome c oxidase is the component of the respiratory chain that catalyzes the reduction of oxygen to water. Electrons originating from reduced cytochrome c in the intermembrane space (IMS) are transferred via the dinuclear copper A center (CU(A)) of subunit 2 and heme A of subunit 1 to the active site in subunit 1, a binuclear center (BNC) formed by heme A3 and copper B (CU(B)). The BNC reduces molecular oxygen to 2 water molecules using 4 electrons from cytochrome c in the IMS and 4 protons from the mitochondrial matrix. This Oncorhynchus mykiss (Rainbow trout) protein is Cytochrome c oxidase subunit 3 (mt-co3).